Reading from the N-terminus, the 160-residue chain is Cytochrome b6-f complex subunit 4 (160 aa).

3 consecutive transmembrane segments (helical) span residues 36–56 (LLYI…GLAV), 95–115 (LLGV…PFLE), and 131–151 (TVFL…TLPI).

This sequence belongs to the cytochrome b family. PetD subfamily. As to quaternary structure, the 4 large subunits of the cytochrome b6-f complex are cytochrome b6, subunit IV (17 kDa polypeptide, petD), cytochrome f and the Rieske protein, while the 4 small subunits are petG, petL, petM and petN. The complex functions as a dimer.

It localises to the plastid. The protein resides in the chloroplast thylakoid membrane. Component of the cytochrome b6-f complex, which mediates electron transfer between photosystem II (PSII) and photosystem I (PSI), cyclic electron flow around PSI, and state transitions. This chain is Cytochrome b6-f complex subunit 4, found in Solanum bulbocastanum (Wild potato).